The sequence spans 1194 residues: Probable disease resistance protein RPP1 (1194 aa).

Residues 1-27 are disordered; sequence MGSVMSLGCSKRKATNQDVDSESRKRR. The region spanning 96–260 is the TIR domain; sequence WKHDVFPSFH…KISTDVSNML (165 aa). 105-110 contacts NAD(+); it reads HGADVR. Glu-171 is a catalytic residue. The NB-ARC domain occupies 280-535; sequence DMLEQLLRLD…ACLFNGESTT (256 aa). LRR repeat units lie at residues 623 to 647, 658 to 681, 690 to 713, 714 to 737, 739 to 760, 761 to 784, 786 to 807, 808 to 831, 832 to 855, 866 to 878, 879 to 899, 900 to 922, 943 to 965, and 966 to 991; these read LSNT…HFVR, QLAL…GYES, PEFL…TKQL, RNLK…STAT, LEEL…IEKL, TSLQ…ENAT, LREL…IGTA, TNLK…IGDI, TDLE…IGNL, CSKL…NINL, KSLD…PEIS, THIS…IMSW, FDII…VKRM, and SRLR…SLDY. The disordered stretch occupies residues 1170–1194; sequence RRSSSPDLSPESSRVSSYDHCLRGD. Residues 1171 to 1185 show a composition bias toward low complexity; that stretch reads RSSSPDLSPESSRVS.

It belongs to the disease resistance TIR-NB-LRR family.

It catalyses the reaction NAD(+) + H2O = ADP-D-ribose + nicotinamide + H(+). Functionally, TIR-NB-LRR receptor-like protein that confers resistance to the pathogen Hyaloperonospora arabidopsis. Probably acts as a NAD(+) hydrolase (NADase): in response to activation, catalyzes cleavage of NAD(+) into ADP-D-ribose (ADPR) and nicotinamide; NAD(+) cleavage triggering a defense system that promotes cell death. The protein is Probable disease resistance protein RPP1 of Arabidopsis thaliana (Mouse-ear cress).